The following is a 793-amino-acid chain: Serine/threonine-protein phosphatase BSU1 (793 aa).

Kelch repeat units lie at residues 53-109 (STTA…LYGT), 110-160 (LILI…IAAQ), 214-262 (IFLL…VFGG), 264-314 (KLHV…NQYQ), and 329-388 (HLYV…EASS). Residues Ser-395 and Ser-444 each carry the phosphoserine modification. Mn(2+) contacts are provided by Asp-510, His-512, Asp-544, and Asn-576. His-577 functions as the Proton donor in the catalytic mechanism. The Mn(2+) site is built by His-629 and His-707. Ser-764 is subject to Phosphoserine.

The protein belongs to the PPP phosphatase family. BSU subfamily. Interacts with CDG1, CDL1 and ASK7/BIN2. Requires Mn(2+) as cofactor. In terms of processing, phosphorylated at Ser-395 and Ser-444. Phosphorylated at Ser-764 by CDG1 and CDL1. Mainly expressed in young, elongating tissues. In young seedlings, it is expressed at the base of the hypocotyl, at the tip and most peripheral cell layers of cotyledons, and in the vascular cylinder of roots, particularly in the elongation zone and at the point of emergence of lateral roots. In mature plants, it is still present in the root vasculature, but almost completely absent in fully expanded stems and leaves. In flowers, it is mainly expressed in sepal veins, anther filaments, and in the style, suggesting that BSU1 is expressed in actively growing regions and apparently enriched in vascular tissues.

It localises to the nucleus. The catalysed reaction is O-phospho-L-seryl-[protein] + H2O = L-seryl-[protein] + phosphate. The enzyme catalyses O-phospho-L-threonyl-[protein] + H2O = L-threonyl-[protein] + phosphate. With respect to regulation, activated by phosphorylation at Ser-764 by CDG1. In terms of biological role, phosphatase that acts as a positive regulator of brassinosteroid (BR) signaling. Dephosphorylates BES1, a transcription factor that regulates the expression of BR-response genes, thereby playing an important role in the regulation of response to BRs. Inactivates the negative regulator of BR signaling ASK7/BIN2 by dephosphorylation at 'Tyr-200'. The chain is Serine/threonine-protein phosphatase BSU1 (BSU1) from Arabidopsis thaliana (Mouse-ear cress).